The primary structure comprises 698 residues: Elongation factor G (698 aa).

Positions 11–291 (THFRNIGIAA…AVVDYLPSPL (281 aa)) constitute a tr-type G domain. GTP contacts are provided by residues 20–27 (AHIDAGKT), 90–94 (DTPGH), and 144–147 (NKMD).

Belongs to the TRAFAC class translation factor GTPase superfamily. Classic translation factor GTPase family. EF-G/EF-2 subfamily.

Its subcellular location is the cytoplasm. Its function is as follows. Catalyzes the GTP-dependent ribosomal translocation step during translation elongation. During this step, the ribosome changes from the pre-translocational (PRE) to the post-translocational (POST) state as the newly formed A-site-bound peptidyl-tRNA and P-site-bound deacylated tRNA move to the P and E sites, respectively. Catalyzes the coordinated movement of the two tRNA molecules, the mRNA and conformational changes in the ribosome. The protein is Elongation factor G of Deinococcus radiodurans (strain ATCC 13939 / DSM 20539 / JCM 16871 / CCUG 27074 / LMG 4051 / NBRC 15346 / NCIMB 9279 / VKM B-1422 / R1).